Reading from the N-terminus, the 314-residue chain is Oxaloacetate tautomerase FAHD2A, mitochondrial (314 aa).

Residues 1-84 (MLVSGRRRLL…ATLSVARRAL (84 aa)) constitute a mitochondrion transit peptide. Residues E159, E161, and D190 each contribute to the Mg(2+) site.

The protein belongs to the FAH family. Requires Mg(2+) as cofactor. Mn(2+) serves as cofactor.

Its subcellular location is the mitochondrion. It carries out the reaction oxaloacetate = enol-oxaloacetate. Its function is as follows. Tautomerase that converts enol-oxaloacetate, a strong inhibitor of succinate dehydrogenase, to the physiological keto form of oxaloacetate. It is thereby required to maximize aerobic respiration efficiency by preventing succinate dehydrogenase inhibition. This Homo sapiens (Human) protein is Oxaloacetate tautomerase FAHD2A, mitochondrial.